The chain runs to 414 residues: MSFRDLRNFTEMMRALGYPRHISMENLRTPNFGLVSEVLLWLVKRYEPQTDIPPDVDTEQDRVFFIKAIAQFMATKAHIKLNTKKLYQADGYAVKELLKITSVLYNAMKTKGMEGSEIVEEDVNKFKFDLGSKIADLKAARQLASEITSKGASLYDLLGMEVELREMRTEAIARPLEINETEKVMRIAIKEILTQVQKTKDLLNNVASDEANLEAKIEKRKLELERNRKRLETLQSVRPCFMDEYEKTEEELQKQYDIYLEKFQNLTYLEQQLEEHHRMEQERFEEAKNTLCLIQNKLKEEEKRLLKSGSNDDSDVDIQEDDESDSELEERRLPKPRTAMEVLMQGRPGKRIVGTMQGGDSDDNEDSEESEIDMEDDDEDEDDDLEDESISLSPTKPNRRVRKPEPLDESDNDF.

A coiled-coil region spans residues 198–291; it reads KTKDLLNNVA…ERFEEAKNTL (94 aa). Positions 305-414 are disordered; it reads LLKSGSNDDS…EPLDESDNDF (110 aa). Acidic residues-rich tracts occupy residues 312-328 and 360-389; these read DDSDVDIQEDDESDSEL and DSDDNEDSEESEIDMEDDDEDEDDDLEDES. Phosphoserine is present on residues Ser314, Ser324, and Ser326. Ser410 is modified (phosphoserine).

Belongs to the CLUAP1 family. In terms of assembly, interacts with CLU/clusterin. Interacts with UBXN10; the interaction is direct.

It is found in the cell projection. It localises to the cilium. Its subcellular location is the nucleus. Required for cilia biogenesis. Appears to function within the multiple intraflagellar transport complex B (IFT-B). Key regulator of hedgehog signaling. This chain is Clusterin-associated protein 1 (CLUAP1), found in Macaca fascicularis (Crab-eating macaque).